Reading from the N-terminus, the 292-residue chain is NAD kinase (292 aa).

The active-site Proton acceptor is D73. NAD(+) contacts are provided by residues 73-74, 147-148, H158, R175, D177, 188-193, and Q247; these read DG, NE, and TAYSLS.

The protein belongs to the NAD kinase family. Requires a divalent metal cation as cofactor.

The protein localises to the cytoplasm. It carries out the reaction NAD(+) + ATP = ADP + NADP(+) + H(+). Its function is as follows. Involved in the regulation of the intracellular balance of NAD and NADP, and is a key enzyme in the biosynthesis of NADP. Catalyzes specifically the phosphorylation on 2'-hydroxyl of the adenosine moiety of NAD to yield NADP. The chain is NAD kinase from Escherichia coli O7:K1 (strain IAI39 / ExPEC).